Consider the following 146-residue polypeptide: VHLTGEEKSAVTTLWGKVNVEEVGGEALGRLLVVYPWTQRFFDSFGDLSSPDAVMNNPKVKAHGKKVLGAFSDGLAHLDNLKGTFAQLSELHCDKLHVDPENFRLLGNVLVCVLAHHFGKEFTPQVQAAYQKVVAGVANALAHKYH.

Val-1 bears the N-acetylvaline mark. Residues 2–146 enclose the Globin domain; it reads HLTGEEKSAV…VANALAHKYH (145 aa). Thr-12 carries the post-translational modification Phosphothreonine. The residue at position 44 (Ser-44) is a Phosphoserine. Residue Lys-59 is modified to N6-acetyllysine. His-63 lines the heme b pocket. Residue Lys-82 is modified to N6-acetyllysine. His-92 contacts heme b. Cys-93 bears the S-nitrosocysteine mark. Lys-144 is modified (N6-acetyllysine).

This sequence belongs to the globin family. In terms of assembly, heterotetramer of two alpha chains and two beta chains. As to expression, red blood cells.

In terms of biological role, involved in oxygen transport from the lung to the various peripheral tissues. This chain is Hemoglobin subunit beta (HBB), found in Saguinus mystax (Moustached tamarin).